The following is a 371-amino-acid chain: Chaperone protein DnaJ (371 aa).

Residues 5–70 (CYYEILNISK…SKRSRYDQFG (66 aa)) form the J domain. The CR-type zinc-finger motif lies at 127-204 (GVEKEITIPR…CYGNGKVKKQ (78 aa)). Cysteine 140, cysteine 143, cysteine 156, cysteine 159, cysteine 178, cysteine 181, cysteine 192, and cysteine 195 together coordinate Zn(2+). CXXCXGXG motif repeat units lie at residues 140-147 (CDSCDGTG), 156-163 (CHACHGQG), 178-185 (CPVCNGTG), and 192-199 (CDACYGNG).

This sequence belongs to the DnaJ family. Homodimer. Zn(2+) serves as cofactor.

It is found in the cytoplasm. Its function is as follows. Participates actively in the response to hyperosmotic and heat shock by preventing the aggregation of stress-denatured proteins and by disaggregating proteins, also in an autonomous, DnaK-independent fashion. Unfolded proteins bind initially to DnaJ; upon interaction with the DnaJ-bound protein, DnaK hydrolyzes its bound ATP, resulting in the formation of a stable complex. GrpE releases ADP from DnaK; ATP binding to DnaK triggers the release of the substrate protein, thus completing the reaction cycle. Several rounds of ATP-dependent interactions between DnaJ, DnaK and GrpE are required for fully efficient folding. Also involved, together with DnaK and GrpE, in the DNA replication of plasmids through activation of initiation proteins. This is Chaperone protein DnaJ from Francisella tularensis subsp. holarctica (strain LVS).